The following is a 178-amino-acid chain: Glucagon-1 (178 aa).

Residues 1–21 (MFGIHSLAGVLLLVIVQRQLA) form the signal peptide. 3 consecutive propeptides follow at residues 83–87 (SGAPS), 123–134 (ESAEESRNGPMS), and 171–178 (SNKRQEDH).

This sequence belongs to the glucagon family.

It localises to the secreted. Its function is as follows. Promotes hydrolysis of glycogen and lipids, and raises the blood sugar level. This Oncorhynchus mykiss (Rainbow trout) protein is Glucagon-1 (gcg1).